A 375-amino-acid polypeptide reads, in one-letter code: Beta sliding clamp (375 aa).

It belongs to the beta sliding clamp family. Forms a ring-shaped head-to-tail homodimer around DNA which binds and tethers DNA polymerases and other proteins to the DNA. The DNA replisome complex has a single clamp-loading complex (3 tau and 1 each of delta, delta', psi and chi subunits) which binds 3 Pol III cores (1 core on the leading strand and 2 on the lagging strand) each with a beta sliding clamp dimer. Additional proteins in the replisome are other copies of gamma, psi and chi, Ssb, DNA helicase and RNA primase.

Its subcellular location is the cytoplasm. Its function is as follows. Confers DNA tethering and processivity to DNA polymerases and other proteins. Acts as a clamp, forming a ring around DNA (a reaction catalyzed by the clamp-loading complex) which diffuses in an ATP-independent manner freely and bidirectionally along dsDNA. Initially characterized for its ability to contact the catalytic subunit of DNA polymerase III (Pol III), a complex, multichain enzyme responsible for most of the replicative synthesis in bacteria; Pol III exhibits 3'-5' exonuclease proofreading activity. The beta chain is required for initiation of replication as well as for processivity of DNA replication. The sequence is that of Beta sliding clamp (dnaN) from Mycoplasma capricolum subsp. capricolum (strain California kid / ATCC 27343 / NCTC 10154).